The chain runs to 516 residues: MSIAWSCFVLGLFALASLQVALANDCAQKTFKTGIVCVCNITYCDEIPDINLLSGQAATFTTSKSGARLHRDVVYATNSDPLTSMHFTIDSSKTYQTIQGFGSTFSDASGANLKSLPDQMADTILRQYFSDSGLNLQFGRVPIASNDFSSRVYTYDDNLEDYNMAHFSLQREDYQWKIPYMQMAQKYNHDLKFFAVPWSAPGWLKTTNSTKGYGILLGTNQDTYHKSYVTYILHFLEEYQKNGILFWGLSTQNEPTSGSDKKTKMQSMGFTAEFQRDFIKLDIGPALKSSNAGKNVKILILDDNRGNLPKWADTVLNDKDAASYVSGIAVHSYQDDESDKHLTQTHNNHPDVFIFGTEASEGSKSKDVDYGSFDRAEDYVSDILDDFNNWVTGWTERNLVLDAQGGPSWVSGFADAPVIAFPALAQFYKQPMFYAIAHFSHFLKPGAVRIDHSLNMPNPEIERSAFLNPDGSKVVVLHNKNPLAPYSLSIKDTMKSTDHYQVHLSPKTIVTLYIQN.

An N-terminal signal peptide occupies residues 1–23 (MSIAWSCFVLGLFALASLQVALA). E254 functions as the Proton donor in the catalytic mechanism. The active-site Nucleophile is the E358.

This sequence belongs to the glycosyl hydrolase 30 family.

It catalyses the reaction a beta-D-glucosylceramide + H2O = an N-acyl-sphingoid base + D-glucose. It carries out the reaction a beta-D-glucosyl-(1&lt;-&gt;1')-N-acylsphing-4-enine + H2O = an N-acylsphing-4-enine + D-glucose. The catalysed reaction is an N-acyl-1-beta-D-glucosyl-15-methylhexadecasphing-4-enine + H2O = an N-acyl-15-methylhexadecasphing-4-enine + D-glucose. Its pathway is lipid metabolism; sphingolipid metabolism. Functionally, glucosylceramidase that catalyzes the hydrolysis of glucosylceramides into free ceramides and glucose. C.elegans contain specific sphingoid bases, which are unique or different in structure compared to the sphingoid bases found in other animals. Two examples of these distinctive compounds are: 15-methylhexadecasphinganine and 15-methylhexadecasphing-4-enine. The protein is Putative glucosylceramidase 2 (gba-2) of Caenorhabditis elegans.